A 390-amino-acid chain; its full sequence is Succinate--CoA ligase [ADP-forming] subunit beta (390 aa).

Residues 9 to 245 form the ATP-grasp domain; it reads KHLLKKYNIP…TTQEDEHETM (237 aa). Residues Lys46, 53-55, Glu99, Ser102, and Glu107 each bind ATP; that span reads GRG. Mg(2+)-binding residues include Asn200 and Asp214. Residues Asn265 and 322–324 contribute to the substrate site; that span reads GIV.

Belongs to the succinate/malate CoA ligase beta subunit family. In terms of assembly, heterotetramer of two alpha and two beta subunits. Mg(2+) is required as a cofactor.

It catalyses the reaction succinate + ATP + CoA = succinyl-CoA + ADP + phosphate. The catalysed reaction is GTP + succinate + CoA = succinyl-CoA + GDP + phosphate. Its pathway is carbohydrate metabolism; tricarboxylic acid cycle; succinate from succinyl-CoA (ligase route): step 1/1. In terms of biological role, succinyl-CoA synthetase functions in the citric acid cycle (TCA), coupling the hydrolysis of succinyl-CoA to the synthesis of either ATP or GTP and thus represents the only step of substrate-level phosphorylation in the TCA. The beta subunit provides nucleotide specificity of the enzyme and binds the substrate succinate, while the binding sites for coenzyme A and phosphate are found in the alpha subunit. The chain is Succinate--CoA ligase [ADP-forming] subunit beta from Coxiella burnetii (strain CbuG_Q212) (Coxiella burnetii (strain Q212)).